The following is a 483-amino-acid chain: E3 ubiquitin-protein ligase TRIM50 (483 aa).

Residues 16-57 (CPICLEVFKEPLMLQCGHSYCKNCLDSLSEHLDSELRCPVCR) form an RING-type zinc finger. Residues 84–125 (TEPTVCVHHRNPLSLFCEKDQEFICGLCGLLGSHQHHRVTPV) form a B box-type zinc finger. Cys89, His92, Cys111, and His117 together coordinate Zn(2+). Coiled coils occupy residues 127 to 169 (TVYS…NESD) and 203 to 236 (GLVA…GNES). Positions 275–474 (DIKLTVWKRL…LPMVLPPPSA (200 aa)) constitute a B30.2/SPRY domain. N6-acetyllysine is present on Lys372.

Belongs to the TRIM/RBCC family. As to quaternary structure, can form dimers and trimers. Interacts with several E2 ubiquitin-conjugating enzymes, including UBE2L6, UBE2E1, UBE2E3. No interaction with UBE2H. Interacts with BECN1. Interacts with SQSTM1. Interacts with NLRP3. In terms of processing, auto-ubiquitinated. Post-translationally, acetylated by EP300 and KAT2B. HDAC6 drives TRIM50 deacetylation. Acetylation antagonizes with TRIM50 ubiquitination.

Its subcellular location is the cytoplasm. It catalyses the reaction S-ubiquitinyl-[E2 ubiquitin-conjugating enzyme]-L-cysteine + [acceptor protein]-L-lysine = [E2 ubiquitin-conjugating enzyme]-L-cysteine + N(6)-ubiquitinyl-[acceptor protein]-L-lysine.. E3 ubiquitin-protein ligase that ubiquitinates Beclin-1/BECN1 in a 'Lys-63'-dependent manner enhancing its binding to ULK1. In turn, promotes starvation-induced autophagy activation. Also interacts with p62/SQSTM1 protein and thereby induces the formation and the autophagy clearance of aggresome-associated polyubiquitinated proteins through HDAC6 interaction. Also promotes NLRP3 inflammasome activation by directly inducing NLRP3 oligomerization independent of its E3 ligase function. This Rattus norvegicus (Rat) protein is E3 ubiquitin-protein ligase TRIM50 (Trim50).